Consider the following 446-residue polypeptide: Na(+)-translocating NADH-quinone reductase subunit A (446 aa).

Belongs to the NqrA family. Composed of six subunits; NqrA, NqrB, NqrC, NqrD, NqrE and NqrF.

It catalyses the reaction a ubiquinone + n Na(+)(in) + NADH + H(+) = a ubiquinol + n Na(+)(out) + NAD(+). Its function is as follows. NQR complex catalyzes the reduction of ubiquinone-1 to ubiquinol by two successive reactions, coupled with the transport of Na(+) ions from the cytoplasm to the periplasm. NqrA to NqrE are probably involved in the second step, the conversion of ubisemiquinone to ubiquinol. This is Na(+)-translocating NADH-quinone reductase subunit A from Psychromonas ingrahamii (strain DSM 17664 / CCUG 51855 / 37).